Consider the following 509-residue polypeptide: Probable aspartic-type endopeptidase CTSD (509 aa).

The first 21 residues, Met1–Ala21, serve as a signal peptide directing secretion. One can recognise a Peptidase A1 domain in the interval Tyr102 to Ala408. Asp120 is an active-site residue. Asn174 carries an N-linked (GlcNAc...) asparagine glycan. Asp302 is an active-site residue. N-linked (GlcNAc...) asparagine glycosylation is present at Asn361. A disordered region spans residues Asn451–Val489. Residues Gly466–Thr480 show a composition bias toward polar residues. N-linked (GlcNAc...) asparagine glycosylation occurs at Asn484. Residue Ser485 is the site of GPI-anchor amidated serine attachment. The propeptide at Ser486–Ser509 is removed in mature form.

This sequence belongs to the peptidase A1 family.

Its subcellular location is the cell membrane. Functionally, probable GPI-anchored aspartic-type endopeptidase which contributes to virulence. The chain is Probable aspartic-type endopeptidase CTSD (CTSD) from Arthroderma benhamiae (strain ATCC MYA-4681 / CBS 112371) (Trichophyton mentagrophytes).